The sequence spans 359 residues: E3 ubiquitin-protein ligase RNF146 (359 aa).

The RING-type zinc finger occupies 37 to 75; the sequence is CAICLQTCVHPVSLPCKHVFCYLCVKGASWLGKRCALCR. Residues Lys-85 and Lys-95 each participate in a glycyl lysine isopeptide (Lys-Gly) (interchain with G-Cter in ubiquitin) cross-link. The region spanning 92 to 168 is the WWE domain; the sequence is EELKAASRGN…EHGRRRKIKR (77 aa). A glycoprotein-binding residues include Tyr-108, Arg-111, and Trp-115. Residue Lys-131 forms a Glycyl lysine isopeptide (Lys-Gly) (interchain with G-Cter in ubiquitin) linkage. Residues Tyr-145, Gln-154, Arg-164, and Lys-176 each contribute to the a glycoprotein site. A Glycyl lysine isopeptide (Lys-Gly) (interchain with G-Cter in ubiquitin) cross-link involves residue Lys-176. The interval 254–359 is disordered; the sequence is GDNTAERSHR…PDGQCTVTEV (106 aa). Residues 284-298 show a composition bias toward acidic residues; the sequence is SIEETESDASSDSED. Ser-290 and Ser-294 each carry phosphoserine. Over residues 306-323 the composition is skewed to polar residues; it reads HSLTQQRLLVSNANQTVP.

As to quaternary structure, can form homooligomers. Interacts with PARsylated AXIN1, AXIN2, BLZF1, CASC3, H1-2, IPO7, LIG3, NCL, PARP1, XRCC1, XRCC5 and XRCC6. Interacts with DDB1, DHX15, IQGAP1, LRPPRC, PARP2, PRKDC, RUVBL2, TNKS1 and TNKS2. Binding often leads to interactor ubiquitination, in the presence of the appropriate E1 and E2 enzymes, and proteasomal degradation. Post-translationally, ubiquitinated; autoubiquitinated. Polyubiquitinated in the presence of UBE2D1, UBE2D2 and UBE2D3. Multimonoubiquitinated in the presence of UBE2E1. Not ubiquitinated in the presence of UBE2H, CDC34, UBE2L3, UBE2L6, nor UBE2C. In the absence of PAR, autoubiquitination occurs on Lys-85, Lys-95 and Lys-176 via 'Lys-11' and 'Lys-48' ubiquitin linkages. In the presence of PAR, Lys-131 and Lys-176 are ubiquitinated via 'Lys-6', 'Lys-33' and 'Lys-48' ubiquitin linkages. Autoubiquitination is enhanced upon PAR-binding. In terms of tissue distribution, ubiquitously expressed. Up-regulated in brains from patients with Alzheimer disease.

The protein resides in the cytoplasm. It localises to the cytosol. The protein localises to the nucleus. The enzyme catalyses S-ubiquitinyl-[E2 ubiquitin-conjugating enzyme]-L-cysteine + [acceptor protein]-L-lysine = [E2 ubiquitin-conjugating enzyme]-L-cysteine + N(6)-ubiquitinyl-[acceptor protein]-L-lysine.. Its pathway is protein modification; protein ubiquitination. Functionally, E3 ubiquitin-protein ligase that specifically binds poly-ADP-ribosylated (PARsylated) proteins and mediates their ubiquitination and subsequent degradation. May regulate many important biological processes, such as cell survival and DNA damage response. Acts as an activator of the Wnt signaling pathway by mediating the ubiquitination of PARsylated AXIN1 and AXIN2, 2 key components of the beta-catenin destruction complex. Acts in cooperation with tankyrase proteins (TNKS and TNKS2), which mediate PARsylation of target proteins AXIN1, AXIN2, BLZF1, CASC3, TNKS and TNKS2. Recognizes and binds tankyrase-dependent PARsylated proteins via its WWE domain and mediates their ubiquitination, leading to their degradation. Different ubiquitin linkage types have been observed: TNKS2 undergoes ubiquitination at 'Lys-48' and 'Lys-63', while AXIN1 is only ubiquitinated at 'Lys-48'. May regulate TNKS and TNKS2 subcellular location, preventing aggregation at a centrosomal location. Neuroprotective protein. Protects the brain against N-methyl-D-aspartate (NMDA) receptor-mediated glutamate excitotoxicity and ischemia, by interfering with PAR-induced cell death, called parthanatos. Prevents nuclear translocation of AIFM1 in a PAR-binding dependent manner. Does not affect PARP1 activation. Protects against cell death induced by DNA damaging agents, such as N-methyl-N-nitro-N-nitrosoguanidine (MNNG) and rescues cells from G1 arrest. Promotes cell survival after gamma-irradiation. Facilitates DNA repair. The sequence is that of E3 ubiquitin-protein ligase RNF146 (RNF146) from Homo sapiens (Human).